A 749-amino-acid chain; its full sequence is Protein SEY1 homolog 2 (749 aa).

The Cytoplasmic portion of the chain corresponds to 1 to 671 (MIKNYGDRYH…QKHKQDFLQN (671 aa)). In terms of domain architecture, GB1/RHD3-type G spans 40–265 (GKNYNIVSII…YEKNVRWSDM (226 aa)). 50-57 (GSQSTGKS) contributes to the GTP binding site. Residues 445–465 (NQLKAFVEAQLATFKQQLDNI) adopt a coiled-coil conformation. A helical transmembrane segment spans residues 672 to 692 (IPKPFWFLLLFFMYDDVLRWM). The Lumenal segment spans residues 693 to 695 (GNP). Residues 696 to 716 (LFLYPILIILCFVGFCIAIGL) form a helical membrane-spanning segment. Over 717-749 (HSLPKLAFQWVFRTLNQAVIPIIFGGISKLKGS) the chain is Cytoplasmic.

This sequence belongs to the TRAFAC class dynamin-like GTPase superfamily. GB1/RHD3 GTPase family. RHD3 subfamily.

It is found in the endoplasmic reticulum membrane. In terms of biological role, probable GTP-binding protein that may be involved in cell development. The sequence is that of Protein SEY1 homolog 2 from Paramecium tetraurelia.